A 962-amino-acid chain; its full sequence is Leucine--tRNA ligase (962 aa).

The short motif at 40 to 51 (PYPSGAGLHVGH) is the 'HIGH' region element. The short motif at 737–741 (KMSKS) is the 'KMSKS' region element. ATP is bound at residue Lys740.

This sequence belongs to the class-I aminoacyl-tRNA synthetase family.

Its subcellular location is the cytoplasm. It carries out the reaction tRNA(Leu) + L-leucine + ATP = L-leucyl-tRNA(Leu) + AMP + diphosphate. The sequence is that of Leucine--tRNA ligase from Flavobacterium psychrophilum (strain ATCC 49511 / DSM 21280 / CIP 103535 / JIP02/86).